Consider the following 290-residue polypeptide: CTP-dependent diacylglycerol kinase 1 (290 aa).

The segment at 1-33 (MGTEDAIALPNSTLEPRTEAKQRLSSKSHQVSA) is disordered. Residues 1–77 (MGTEDAIALP…FITKHEIPRK (77 aa)) are Lumenal-facing. N-linked (GlcNAc...) asparagine glycosylation is present at Asn11. The segment covering 23–33 (RLSSKSHQVSA) has biased composition (polar residues). Phosphoserine is present on residues Ser44, Ser45, and Ser46. Residues 78 to 95 (VFHSSIGFITLYLYTQGI) form a helical membrane-spanning segment. At 96 to 103 (NYKNVLWP) the chain is on the cytoplasmic side. The helical transmembrane segment at 104 to 124 (LIYAFIILFILDLIRLNWPFF) threads the bilayer. At 125–140 (NMLYCRTVGALMRKKE) the chain is on the lumenal side. Residues 141–161 (IHTYNGVLWYILGLIFSFNFF) traverse the membrane as a helical segment. Topologically, residues 162–163 (SK) are cytoplasmic. Residues 164–184 (DVTLISLFLLSWSDTAAATIG) traverse the membrane as a helical segment. Residues 185 to 203 (RKYGHLTPKVARNKSLAGS) are Lumenal-facing. Asn197 carries N-linked (GlcNAc...) asparagine glycosylation. The helical transmembrane segment at 204–224 (IAAFTVGVITCWVFYGYFVPA) threads the bilayer. The Cytoplasmic portion of the chain corresponds to 225-244 (YSYVNKPGEIQWSPETSRLS). A helical membrane pass occupies residues 245–265 (LNMLSLLGGVVAALSEGIDLF). Residues 266–290 (NWDDNFTIPVLSSLFMNAVIKTFKK) lie on the Lumenal side of the membrane. A glycan (N-linked (GlcNAc...) asparagine) is linked at Asn270.

It belongs to the DGK1 family. Ca(2+) is required as a cofactor. Mg(2+) serves as cofactor. Post-translationally, CKII-mediated phosphorylation of Ser-45 and Ser-46 regulates its function in the production of PA.

It is found in the endoplasmic reticulum membrane. The protein localises to the nucleus membrane. It catalyses the reaction a 1,2-diacyl-sn-glycerol + CTP = a 1,2-diacyl-sn-glycero-3-phosphate + CDP + H(+). It carries out the reaction 1,2-di-(9Z-octadecenoyl)-sn-glycerol + CTP = 1,2-di-(9Z-octadecenoyl)-sn-glycero-3-phosphate + CDP + H(+). With respect to regulation, inhibited by N-ethylmaleimide, dCTP, and sphingoid bases including sphinganine, sphingosine and phytosphingosine. DAG pyrophosphate, cardiolipin, CDP-DAG, and lyso-PA inhibited activity by 23-66%. Also inhibited by Ca(2+) concentrations of more than 1 mM, by addition of EDTA or EGTA at 5 mM, and by 5 mM Mn(2+) and Zn(2+). Stimulated by major membrane phospholipids including phosphatidylcholine, phosphatidylethanolamine, phosphatidylinositol, phosphatidylserine, phosphatidylglycerol, and phosphatidate. Also stimulated to a maximum by addition of TritonX-100 at a concentration of 1 mM, followed by an apparent inhibition of activity at concentrations above 1 mM. Functionally, CTP-dependent diacylglycerol kinase that catalyzes the phosphorylation of diacylglycerol (DAG) to phosphatidate (PA). Controls phosphatidate levels at the nuclear envelope. Counteracts the activity of PA phosphatase PAH1/SMP2, controlling the levels of PA and DAG for the synthesis of triacylglycerol and membrane phospholipids. May be involved in vesicle trafficking between the endoplasmic reticulum and the Golgi apparatus. Required to convert triacylglycerol-derived DAG to PA for phospholipid synthesis during growth resumption from stationary phase in the absence of de novo fatty acid synthesis. Involved in the resistance to nickel chloride and nalidixic acid. The chain is CTP-dependent diacylglycerol kinase 1 (DGK1) from Saccharomyces cerevisiae (strain ATCC 204508 / S288c) (Baker's yeast).